Reading from the N-terminus, the 177-residue chain is Large ribosomal subunit protein uL6 (177 aa).

Belongs to the universal ribosomal protein uL6 family. Part of the 50S ribosomal subunit.

In terms of biological role, this protein binds to the 23S rRNA, and is important in its secondary structure. It is located near the subunit interface in the base of the L7/L12 stalk, and near the tRNA binding site of the peptidyltransferase center. This Glaesserella parasuis serovar 5 (strain SH0165) (Haemophilus parasuis) protein is Large ribosomal subunit protein uL6.